The following is a 203-amino-acid chain: Peptidyl-prolyl cis-trans isomerase FKBP11 (203 aa).

Positions 1-29 (MTLRPSLLPLRLLLLLLLLLRGAVCQAEA) are cleaved as a signal peptide. Positions 59-146 (GDTLHIHYSG…HFDVELIALI (88 aa)) constitute a PPIase FKBP-type domain. The chain crosses the membrane as a helical span at residues 158 to 178 (ILPLVGMAMVPALLGLIGYHL).

The protein belongs to the FKBP-type PPIase family. In terms of assembly, interacts with IFITM5.

The protein localises to the membrane. The enzyme catalyses [protein]-peptidylproline (omega=180) = [protein]-peptidylproline (omega=0). Its function is as follows. PPIases accelerate the folding of proteins during protein synthesis. This chain is Peptidyl-prolyl cis-trans isomerase FKBP11 (FKBP11), found in Bos taurus (Bovine).